The chain runs to 891 residues: Extended synaptotagmin-3 (891 aa).

Residues Met1 to Arg30 are disordered. Residues Met1–Ser32 lie on the Cytoplasmic side of the membrane. Residues Val17–Gly28 show a composition bias toward basic and acidic residues. The chain crosses the membrane as a helical span at residues Gly33 to Val53. Position 54 (Tyr54) is a topological domain, lumenal. A helical transmembrane segment spans residues Leu55–Trp75. Topologically, residues Trp76–Ser891 are cytoplasmic. Residues Asp118–Lys295 form the SMP-LTD domain. 2 C2 domains span residues Val292 to Phe412 and Ser430 to His570. Residues Lys325, Asp326, Asp336, Asp383, Glu384, Asp385, Asp387, Asp389, and Asp390 each contribute to the Ca(2+) site. The disordered stretch occupies residues Ser652–Pro711. Pro residues predominate over residues Glu659–Glu670. Positions Arg759–Tyr881 constitute a C2 3 domain. The tract at residues Arg806–Lys813 is required for phosphatidylinositol 4,5-bisphosphate-dependent location at the cell membrane.

This sequence belongs to the extended synaptotagmin family.

The protein localises to the cell membrane. Its subcellular location is the endoplasmic reticulum membrane. In terms of biological role, tethers the endoplasmic reticulum to the cell membrane and promotes the formation of appositions between the endoplasmic reticulum and the cell membrane. Binds glycerophospholipids in a barrel-like domain and may play a role in cellular lipid transport. In Mus musculus (Mouse), this protein is Extended synaptotagmin-3 (Esyt3).